Here is a 431-residue protein sequence, read N- to C-terminus: Adenylosuccinate synthetase (431 aa).

GTP contacts are provided by residues 12 to 18 and 40 to 42; these read GDEGKGK and GHT. D13 acts as the Proton acceptor in catalysis. Positions 13 and 40 each coordinate Mg(2+). Residues 13–16, 38–41, T129, R143, Q224, and T239 contribute to the IMP site; these read DEGK and NAGH. The active-site Proton donor is the H41. K292 participates in a covalent cross-link: Isoglutamyl lysine isopeptide (Lys-Gln) (interchain with Q-Cter in protein Pup). 299–305 serves as a coordination point for substrate; that stretch reads VTTGRAR. R303 is a binding site for IMP. Residues R305, 331-333, and 413-415 contribute to the GTP site; these read KLD and GVG.

The protein belongs to the adenylosuccinate synthetase family. Homodimer. The cofactor is Mg(2+).

Its subcellular location is the cytoplasm. It catalyses the reaction IMP + L-aspartate + GTP = N(6)-(1,2-dicarboxyethyl)-AMP + GDP + phosphate + 2 H(+). It functions in the pathway purine metabolism; AMP biosynthesis via de novo pathway; AMP from IMP: step 1/2. Its function is as follows. Plays an important role in the de novo pathway of purine nucleotide biosynthesis. Catalyzes the first committed step in the biosynthesis of AMP from IMP. The chain is Adenylosuccinate synthetase from Mycolicibacterium smegmatis (strain ATCC 700084 / mc(2)155) (Mycobacterium smegmatis).